The sequence spans 316 residues: Large ribosomal subunit protein uL10 (316 aa).

The interval 282-316 (ASAAKADEPKKEEAKKVEEEEEEEEDGFMGFGMFD) is disordered. Basic and acidic residues predominate over residues 286–299 (KADEPKKEEAKKVE).

It belongs to the universal ribosomal protein uL10 family. P0 forms a pentameric complex by interaction with dimers of P1 and P2. In terms of processing, phosphorylated.

Functionally, ribosomal protein P0 is the functional equivalent of E.coli protein L10. The sequence is that of Large ribosomal subunit protein uL10 (RPLP0) from Plasmodium falciparum (isolate 7G8).